We begin with the raw amino-acid sequence, 324 residues long: NAD(P)H-dependent D-xylose reductase I,II (324 aa).

The active-site Proton donor is the Y54. H116 contributes to the substrate binding site. Residues 171 to 172 (SN), 220 to 229 (SSFGPQSFLE), and 276 to 286 (KSNNPERLAQN) each bind NAD(+).

Belongs to the aldo/keto reductase family.

It catalyses the reaction xylitol + NAD(+) = D-xylose + NADH + H(+). The catalysed reaction is xylitol + NADP(+) = D-xylose + NADPH + H(+). It functions in the pathway carbohydrate metabolism; D-xylose degradation. Reduces D-xylose into xylitol. Has a preference for NADPH, but can also utilize NADH as cosubstrate. The chain is NAD(P)H-dependent D-xylose reductase I,II (xyrA) from Candida tropicalis (Yeast).